Reading from the N-terminus, the 118-residue chain is Large ribosomal subunit protein uL24 (118 aa).

The segment at methionine 1–valine 24 is disordered.

Belongs to the universal ribosomal protein uL24 family. As to quaternary structure, part of the 50S ribosomal subunit.

Functionally, one of two assembly initiator proteins, it binds directly to the 5'-end of the 23S rRNA, where it nucleates assembly of the 50S subunit. Its function is as follows. Located at the polypeptide exit tunnel on the outside of the subunit. This chain is Large ribosomal subunit protein uL24, found in Halobacterium salinarum (strain ATCC 700922 / JCM 11081 / NRC-1) (Halobacterium halobium).